Consider the following 141-residue polypeptide: Hemoglobin subunit alpha-A (141 aa).

The 141-residue stretch at 1–141 (VLSGSDKTNV…VGNVLTAKYR (141 aa)) folds into the Globin domain. Histidine 58 contributes to the O2 binding site. Histidine 87 provides a ligand contact to heme b.

It belongs to the globin family. Heterotetramer of two alpha chains and two beta chains. In terms of tissue distribution, red blood cells.

Its function is as follows. Involved in oxygen transport from the lung to the various peripheral tissues. This Chroicocephalus ridibundus (Black-headed gull) protein is Hemoglobin subunit alpha-A (HBAA).